A 222-amino-acid polypeptide reads, in one-letter code: Probable RNA 2'-phosphotransferase (222 aa).

Belongs to the KptA/TPT1 family.

Removes the 2'-phosphate from RNA via an intermediate in which the phosphate is ADP-ribosylated by NAD followed by a presumed transesterification to release the RNA and generate ADP-ribose 1''-2''-cyclic phosphate (APPR&gt;P). May function as an ADP-ribosylase. The protein is Probable RNA 2'-phosphotransferase of Haloarcula marismortui (strain ATCC 43049 / DSM 3752 / JCM 8966 / VKM B-1809) (Halobacterium marismortui).